A 239-amino-acid chain; its full sequence is Ribose-5-phosphate isomerase A (239 aa).

Substrate-binding positions include 40–43 (SGST), 96–99 (DGAD), and 110–113 (KGGG). Glutamate 119 serves as the catalytic Proton acceptor. Lysine 137 provides a ligand contact to substrate.

It belongs to the ribose 5-phosphate isomerase family. In terms of assembly, homodimer.

It catalyses the reaction aldehydo-D-ribose 5-phosphate = D-ribulose 5-phosphate. It functions in the pathway carbohydrate degradation; pentose phosphate pathway; D-ribose 5-phosphate from D-ribulose 5-phosphate (non-oxidative stage): step 1/1. Its function is as follows. Catalyzes the reversible conversion of ribose-5-phosphate to ribulose 5-phosphate. In Methanococcus maripaludis (strain DSM 14266 / JCM 13030 / NBRC 101832 / S2 / LL), this protein is Ribose-5-phosphate isomerase A.